We begin with the raw amino-acid sequence, 312 residues long: Pantothenate kinase (312 aa).

Position 97–104 (97–104) interacts with ATP; the sequence is GSVAVGKS.

This sequence belongs to the prokaryotic pantothenate kinase family.

Its subcellular location is the cytoplasm. The enzyme catalyses (R)-pantothenate + ATP = (R)-4'-phosphopantothenate + ADP + H(+). The protein operates within cofactor biosynthesis; coenzyme A biosynthesis; CoA from (R)-pantothenate: step 1/5. This Corynebacterium glutamicum (strain ATCC 13032 / DSM 20300 / JCM 1318 / BCRC 11384 / CCUG 27702 / LMG 3730 / NBRC 12168 / NCIMB 10025 / NRRL B-2784 / 534) protein is Pantothenate kinase.